A 477-amino-acid chain; its full sequence is Ribulose bisphosphate carboxylase large chain (477 aa).

Residues 1–2 (MS) constitute a propeptide that is removed on maturation. P3 is modified (N-acetylproline). Residue K14 is modified to N6,N6,N6-trimethyllysine. Substrate is bound by residues N123 and T173. Residue K175 is the Proton acceptor of the active site. K177 contributes to the substrate binding site. The Mg(2+) site is built by K201, D203, and E204. K201 is modified (N6-carboxylysine). H294 acts as the Proton acceptor in catalysis. Residues R295, H327, and S379 each contribute to the substrate site.

This sequence belongs to the RuBisCO large chain family. Type I subfamily. Heterohexadecamer of 8 large chains and 8 small chains; disulfide-linked. The disulfide link is formed within the large subunit homodimers. Requires Mg(2+) as cofactor. In terms of processing, the disulfide bond which can form in the large chain dimeric partners within the hexadecamer appears to be associated with oxidative stress and protein turnover.

Its subcellular location is the plastid. The protein resides in the chloroplast. The enzyme catalyses 2 (2R)-3-phosphoglycerate + 2 H(+) = D-ribulose 1,5-bisphosphate + CO2 + H2O. It catalyses the reaction D-ribulose 1,5-bisphosphate + O2 = 2-phosphoglycolate + (2R)-3-phosphoglycerate + 2 H(+). Its function is as follows. RuBisCO catalyzes two reactions: the carboxylation of D-ribulose 1,5-bisphosphate, the primary event in carbon dioxide fixation, as well as the oxidative fragmentation of the pentose substrate in the photorespiration process. Both reactions occur simultaneously and in competition at the same active site. The protein is Ribulose bisphosphate carboxylase large chain of Cichorium intybus (Chicory).